Consider the following 572-residue polypeptide: AAA ATPase forming ring-shaped complexes (572 aa).

Residues 1–18 (MTTASQQTSSHSTASSTS) are compositionally biased toward low complexity. A disordered region spans residues 1-30 (MTTASQQTSSHSTASSTSRKGNNNDATPSL). The stretch at 42-70 (TRNAKLVEMLKASRDKLDALNEQIRALSD) forms a coiled coil. 258-263 (GCGKTL) lines the ATP pocket. The disordered stretch occupies residues 543-572 (VAHHNRKTTTETEATEPEGTDSGKGHTDAS). A compositionally biased stretch (basic and acidic residues) spans 563–572 (DSGKGHTDAS).

It belongs to the AAA ATPase family. Homohexamer. Assembles into a hexameric ring structure.

In Corynebacterium kroppenstedtii (strain DSM 44385 / JCM 11950 / CIP 105744 / CCUG 35717), this protein is AAA ATPase forming ring-shaped complexes.